Consider the following 511-residue polypeptide: Histidine ammonia-lyase (511 aa).

Residues 142–144 (ASG) constitute a cross-link (5-imidazolinone (Ala-Gly)). Residue Ser-143 is modified to 2,3-didehydroalanine (Ser).

Belongs to the PAL/histidase family. Contains an active site 4-methylidene-imidazol-5-one (MIO), which is formed autocatalytically by cyclization and dehydration of residues Ala-Ser-Gly.

It localises to the cytoplasm. It catalyses the reaction L-histidine = trans-urocanate + NH4(+). It participates in amino-acid degradation; L-histidine degradation into L-glutamate; N-formimidoyl-L-glutamate from L-histidine: step 1/3. The sequence is that of Histidine ammonia-lyase from Brucella abortus (strain S19).